Here is a 397-residue protein sequence, read N- to C-terminus: Phosphoglycerate kinase (397 aa).

Substrate is bound by residues 21-23, R36, 59-62, R118, and R151; these read DFN and HCGR. Residues K201, E323, and 353–356 contribute to the ATP site; that span reads GGDT.

Belongs to the phosphoglycerate kinase family. Monomer.

Its subcellular location is the cytoplasm. It catalyses the reaction (2R)-3-phosphoglycerate + ATP = (2R)-3-phospho-glyceroyl phosphate + ADP. Its pathway is carbohydrate degradation; glycolysis; pyruvate from D-glyceraldehyde 3-phosphate: step 2/5. In Bartonella tribocorum (strain CIP 105476 / IBS 506), this protein is Phosphoglycerate kinase.